A 1416-amino-acid polypeptide reads, in one-letter code: Tiny macrocysts protein B (1416 aa).

8 helical membrane passes run Ile-47–His-67, Phe-93–Phe-113, Phe-140–Leu-160, Ala-185–Phe-205, Val-231–Pro-251, Leu-253–Leu-273, Ser-285–Asn-305, and Ile-315–Phe-335. Basic and acidic residues predominate over residues Leu-356–Ser-372. Disordered stretches follow at residues Leu-356 to Lys-377 and Ile-662 to Lys-691. Helical transmembrane passes span Trp-706–Phe-726 and Ala-953–Phe-973. Disordered regions lie at residues Arg-1018–Met-1103 and Asn-1119–Thr-1144. The span at Thr-1024–Asn-1039 shows a compositional bias: acidic residues. Composition is skewed to low complexity over residues Asn-1048–Asn-1062 and Ser-1083–Ser-1094. Basic and acidic residues predominate over residues Gln-1123–Thr-1144. A run of 3 helical transmembrane segments spans residues Ile-1179–Val-1199, Trp-1325–Phe-1345, and Val-1358–Phe-1378.

The protein resides in the membrane. Its function is as follows. Regulator of the cAMP signaling pathway specific to sexual development. Controls the levels of external cAMP by regulating the expression of phosphodiesterase pdsA and its inhibitor pdiA. The polypeptide is Tiny macrocysts protein B (tmcB) (Dictyostelium discoideum (Social amoeba)).